Reading from the N-terminus, the 334-residue chain is Terpene synthase 1 (334 aa).

2 residues coordinate Mg(2+): Asp-82 and Asp-86. Positions 82–86 (DDIFD) match the D(D/E)XX(D/E) motif motif. Residue Arg-184 participates in substrate binding. The Mg(2+) site is built by Asn-230, Ser-234, and Glu-238. Positions 230-238 (NDIYSYHRE) match the NSE motif motif. The WxxxxxRY motif motif lies at 309–316 (WSESCTRY).

This sequence belongs to the terpene synthase family. It depends on Mg(2+) as a cofactor.

The enzyme catalyses (2E,6E)-farnesyl diphosphate = gamma-muurolene + diphosphate. It catalyses the reaction (2E,6E)-farnesyl diphosphate = alpha-muurolene + diphosphate. The catalysed reaction is (2E,6E)-farnesyl diphosphate = (-)-(E)-beta-caryophyllene + diphosphate. It carries out the reaction (2E)-geranyl diphosphate = beta-myrcene + diphosphate. Its function is as follows. Terpene synthase that catalyzes the cyclization of farnesyl diphosphate (FPP) into a mixture of sesquiterpenes with gamma-muurolene as the most abundant compound and (-)-beta-caryophyllene, alpha-muurolene, and 4 unidentified sesquiterpenes as minor compoundss. TPS1 also shows monoterpene synthase activity and can also use geranyl diphosphate (GPP) as a substrate to convert it into a mixture of cyclic and acyclic monoterpenes, including myrcene and linalool. P.polycephalum has a unique biology and these volatile terpenoids could function in internal communication of P.polycephalum, to mark the territory that have been explored, or they may be involved in chemotaxis. This is Terpene synthase 1 from Physarum polycephalum (Slime mold).